The sequence spans 94 residues: Large ribosomal subunit protein bL27 (94 aa).

Residues 1 to 9 constitute a propeptide that is removed on maturation; that stretch reads MNLANLQLF. The interval 11–34 is disordered; sequence HKKGGGSTSNGRDSQAKRLGAKAA.

It belongs to the bacterial ribosomal protein bL27 family. In terms of processing, the N-terminus is cleaved by ribosomal processing cysteine protease Prp.

This is Large ribosomal subunit protein bL27 from Streptococcus pyogenes serotype M3 (strain ATCC BAA-595 / MGAS315).